Here is a 169-residue protein sequence, read N- to C-terminus: Glycine-rich RNA-binding protein 10 (169 aa).

The 79-residue stretch at 6-84 folds into the RRM domain; it reads YRCFVGGLAW…RTITVNEAQS (79 aa). Disordered regions lie at residues 80 to 101 and 121 to 169; these read NEAQ…YGGR and GYGS…GGGW. Positions 85-101 are enriched in gly residues; that stretch reads RGGGGGGGRGGGGYGGR.

Expressed only in roots and stems.

In terms of biological role, possibly has a role in RNA transcription or processing during stress. This Brassica napus (Rape) protein is Glycine-rich RNA-binding protein 10 (GRP10).